The primary structure comprises 130 residues: Small ribosomal subunit protein uS9 (130 aa).

The protein belongs to the universal ribosomal protein uS9 family.

The protein is Small ribosomal subunit protein uS9 of Halalkalibacterium halodurans (strain ATCC BAA-125 / DSM 18197 / FERM 7344 / JCM 9153 / C-125) (Bacillus halodurans).